The following is a 312-amino-acid chain: UDP-N-acetylenolpyruvoylglucosamine reductase (312 aa).

An FAD-binding PCMH-type domain is found at 24–206 (GIGGPADLFA…SADILKVRNE (183 aa)). Arg166 is an active-site residue. Catalysis depends on Ser217, which acts as the Proton donor. Glu307 is a catalytic residue.

The protein belongs to the MurB family. Requires FAD as cofactor.

It localises to the cytoplasm. The catalysed reaction is UDP-N-acetyl-alpha-D-muramate + NADP(+) = UDP-N-acetyl-3-O-(1-carboxyvinyl)-alpha-D-glucosamine + NADPH + H(+). It participates in cell wall biogenesis; peptidoglycan biosynthesis. In terms of biological role, cell wall formation. This Solibacter usitatus (strain Ellin6076) protein is UDP-N-acetylenolpyruvoylglucosamine reductase.